Here is a 416-residue protein sequence, read N- to C-terminus: Histidinol dehydrogenase (416 aa).

Y117, Q178, and N201 together coordinate NAD(+). Residues T224, Q246, and H249 each coordinate substrate. Residues Q246 and H249 each contribute to the Zn(2+) site. Residues E314 and H315 each act as proton acceptor in the active site. Substrate is bound by residues H315, D348, E402, and H407. D348 provides a ligand contact to Zn(2+). Residue H407 coordinates Zn(2+).

The protein belongs to the histidinol dehydrogenase family. The cofactor is Zn(2+).

It carries out the reaction L-histidinol + 2 NAD(+) + H2O = L-histidine + 2 NADH + 3 H(+). Its pathway is amino-acid biosynthesis; L-histidine biosynthesis; L-histidine from 5-phospho-alpha-D-ribose 1-diphosphate: step 9/9. Catalyzes the sequential NAD-dependent oxidations of L-histidinol to L-histidinaldehyde and then to L-histidine. The polypeptide is Histidinol dehydrogenase (Staphylococcus aureus (strain bovine RF122 / ET3-1)).